We begin with the raw amino-acid sequence, 507 residues long: Maturase K (507 aa).

This sequence belongs to the intron maturase 2 family. MatK subfamily.

It localises to the plastid. The protein localises to the chloroplast. Functionally, usually encoded in the trnK tRNA gene intron. Probably assists in splicing its own and other chloroplast group II introns. This chain is Maturase K, found in Cananga odorata (Ylang-ylang tree).